Consider the following 246-residue polypeptide: Ribonuclease 3 (246 aa).

Positions 30 to 152 constitute an RNase III domain; the sequence is ISWIEKNLGH…MIGAIFLESG (123 aa). Residue Glu-65 coordinates Mg(2+). Asp-69 is an active-site residue. Mg(2+) is bound by residues Asp-138 and Glu-141. Residue Glu-141 is part of the active site. One can recognise a DRBM domain in the interval 177–246; the sequence is HPKSALQEWA…AQALLDILAQ (70 aa).

It belongs to the ribonuclease III family. As to quaternary structure, homodimer. The cofactor is Mg(2+).

It is found in the cytoplasm. It carries out the reaction Endonucleolytic cleavage to 5'-phosphomonoester.. In terms of biological role, digests double-stranded RNA. Involved in the processing of primary rRNA transcript to yield the immediate precursors to the large and small rRNAs (23S and 16S). Processes some mRNAs, and tRNAs when they are encoded in the rRNA operon. Processes pre-crRNA and tracrRNA of type II CRISPR loci if present in the organism. This is Ribonuclease 3 from Zymomonas mobilis subsp. mobilis (strain ATCC 31821 / ZM4 / CP4).